We begin with the raw amino-acid sequence, 118 residues long: Large ribosomal subunit protein bL19 (118 aa).

This sequence belongs to the bacterial ribosomal protein bL19 family.

In terms of biological role, this protein is located at the 30S-50S ribosomal subunit interface and may play a role in the structure and function of the aminoacyl-tRNA binding site. The chain is Large ribosomal subunit protein bL19 from Citrifermentans bemidjiense (strain ATCC BAA-1014 / DSM 16622 / JCM 12645 / Bem) (Geobacter bemidjiensis).